A 488-amino-acid polypeptide reads, in one-letter code: Zinc metalloproteinase-disintegrin agkistin (488 aa).

The first 20 residues, 1–20 (MIQVLLVTICLAVFPYQGSS), serve as a signal peptide directing secretion. A propeptide spanning residues 21–195 (IILESGNVND…NFPPDGRIEF (175 aa)) is cleaved from the precursor. Positions 198–394 (RYIELVIVAD…NPLASYCLYN (197 aa)) constitute a Peptidase M12B domain. Glu201 is a binding site for Ca(2+). Asn258 is a glycosylation site (N-linked (GlcNAc...) asparagine). Asp285 serves as a coordination point for Ca(2+). 3 disulfides stabilise this stretch: Cys309–Cys391, Cys349–Cys373, and Cys351–Cys356. His334 serves as a coordination point for Zn(2+). Residue Glu335 is part of the active site. Residues His338 and His344 each coordinate Zn(2+). Ca(2+) is bound by residues Cys391, Asn394, Val406, Asn409, Glu413, Glu416, and Asp419. The region spanning 404–488 (PPVCGNYYLE…AGCPRNPSHA (85 aa)) is the Disintegrin domain. Disulfide bonds link Cys407/Cys426, Cys418/Cys436, Cys420/Cys431, Cys430/Cys453, Cys444/Cys450, Cys449/Cys474, and Cys462/Cys481. The Cell attachment site motif lies at 466–468 (RGD).

The protein belongs to the venom metalloproteinase (M12B) family. P-II subfamily. P-IIb sub-subfamily. In terms of assembly, monomer. It depends on Zn(2+) as a cofactor. Expressed by the venom gland.

It localises to the secreted. Inhibits ADP-induced human platelet aggregation, inhibits bovine aortic endothelial cells (BAEC) migration, has anti-angiogenic activity and induces BAEC and human micro-vascular endothelial cell (HMEC) apoptosis. The metalloproteinase domain may act in hemorrhage. This chain is Zinc metalloproteinase-disintegrin agkistin, found in Gloydius halys (Chinese water mocassin).